We begin with the raw amino-acid sequence, 996 residues long: MLGISNLCRYYQGQRRVCANKFYQKYVNHSDLYFFDLWEISANNLWIKLAFVLLLCLFEIISGLEYLGKMAQEILKQGIPANVLQEKANLFKKASANNKIKDEMPNALSLYQNHSFFQKLKHLADKKNLDITSLPGGREVEYKHLDAGHLLADTNVVIDVPLVPQLAARTPTDYNFGTSRDKSATALHVGAIEVVIQSYASSECDLMAGMMLVDTFHSRPENAIRSVYIVPIRGGMFMRALCFPNTLVPMDSDINNRFKVVFSLPNNDFPQGSKLGHVSINMAGCTTSLSKTYVPSPLLTEELGREAATVIQYLGRDTYAMQTSNVPTSDEISRMVFNFHMEGKLSMHKTGSLSSILSKSKSLRYTIGGSKPKNKLADKAHNEEAETSDSKGIIDPKDGNVFANPQTDTDLFKLSLDDTSSPKGSLLDTRFAQKKVLIPKAMAGGADLLSSNLYDVLSGSSFRASLALARTHVVEGKIRCICTINLPENTGCCLAITVNSSNRGQFSTDIYTTGSQDRILWNPACSKNCDFSFNPNPCGTAWSLEFLRRTKFHLSVTCVSGWSAQPQTDIAMTMDWYVSNKPCVPCIYNVGTPGQNVWVNRWMGKLSFPQGSQNQLKQMPLAIGGGAGAKNSILMNMTNAFLSLWRYFHGDLVFEVQKMSSPFIKSTVTFFIGFGGLPFSENLEDFPNKLIQFGEVQERVEITFTRKEFLTAWSTQVDPAGPVAGDGCPYLCAMVHDSTASTITGDFNLGVTLLRIENFVGIGRNPGIQGARLLGSMQAEAQGGVVRTTDGVYSTCFRVRTPLALKDSGSFTCDLIGGGITTDSNTGWNLTALNTPVANLLRTAAWKRGTIHVQVAMFGSTVKRSDWTSTVQLFLRQSMNTSSYDARVWVISKPGAAILEFSFDVEGPNNGFEMWEANWASQTSWFLEFLISNVTQNTLFEVSMKLDSNFCVAGTTLMPPFSVTASPDSRPLLGVKTSTPAKKYVGGSLQAGPSPD.

The tract at residues 363–369 is involved in tubule formation by the movement protein; the sequence is LRYTIGG. The tract at residues 368 to 398 is disordered; that stretch reads GGSKPKNKLADKAHNEEAETSDSKGIIDPKD. The segment covering 375-398 has biased composition (basic and acidic residues); it reads KLADKAHNEEAETSDSKGIIDPKD.

In terms of assembly, interacts with the large capsid protein. As to quaternary structure, interacts with the small capsid protein. Homomultimer; assembles as pentons. Interacts with the movement protein (via C-terminus). Interacts (via C-terminus) with the large capsid protein. Post-translationally, specific enzymatic cleavages by picornain 3C-like protease in vivo yield mature proteins.

It is found in the host cell junction. It localises to the host plasmodesma. The protein localises to the virion. Responsible for viral RNA2 accumulation. May function by recruiting the RNA1-encoded polyprotein that contains the replication protein to RNA2 and enable its replication. Functionally, transports the viral genome to neighboring plant cells directly through plasmosdesmata, without any budding. The movement protein allows efficient cell to cell propagation, by bypassing the host cell wall barrier. Acts by forming a tubular structure at the host plasmodesmata, enlarging it enough to allow free passage of virion capsids. Binds to GTP and to single-stranded RNA and single-stranded DNA in a non-sequence-specific manner. In terms of biological role, together with the mature small capsid protein, forms an icosahedral capsid (T=3) enclosing the viral positive strand RNA genome, with a diameter of approximately 300 Angstroms. The capsid is formed from 60 copies each of the large and the mature small capsid protein. The large capsid protein interacts with the viral RNA. Its function is as follows. Together with the large capsid protein, forms an icosahedral capsid (T=3) enclosing the viral positive strand RNA genome, with a diameter of approximately 300 Angstroms. The capsid is formed from 60 copies each of the large and the mature small capsid protein. The mature small capsid protein forms the turrets at the fivefold axes of the viral particle. This chain is RNA2 polyprotein, found in Red clover mottle virus (RCMV).